A 104-amino-acid chain; its full sequence is Signal recognition particle 19 kDa protein (104 aa).

This sequence belongs to the SRP19 family. In terms of assembly, part of the signal recognition particle protein translocation system, which is composed of SRP and FtsY. Archaeal SRP consists of a 7S RNA molecule of 300 nucleotides and two protein subunits: SRP54 and SRP19.

The protein localises to the cytoplasm. Functionally, involved in targeting and insertion of nascent membrane proteins into the cytoplasmic membrane. Binds directly to 7S RNA and mediates binding of the 54 kDa subunit of the SRP. The chain is Signal recognition particle 19 kDa protein from Archaeoglobus fulgidus (strain ATCC 49558 / DSM 4304 / JCM 9628 / NBRC 100126 / VC-16).